A 299-amino-acid polypeptide reads, in one-letter code: MKPDAHHVKQFLLRLQDDICQKLSAVDGANFVEDSWRREAGGGGRSRVLRNGGIFEQAGVNFSHVHGDAMPASATAHRPELAGRSFEAMGVSLVVHPHNPYIPTSHANVRFFIAEKPGADPVWWFGGGFDLTPYYGFEEDAVHWHRTARDLCQPFGDDVYPRYKKWCDDYFFLKHRNEQRGIGGLFFDDLNTPDFDHCFAFMQAVGNGYTEAYLPIVERRKAMVWGERERNFQLYRRGRYVEFNLVWDRGTLFGLQTGGRTESILMSMPPLVRWEYDWQPEAGSPEAALSEFIQVRDWI.

Residue Ser-92 coordinates substrate. Residues His-96 and His-106 each contribute to the a divalent metal cation site. His-106 acts as the Proton donor in catalysis. 108 to 110 (NVR) serves as a coordination point for substrate. Residues His-145 and His-175 each coordinate a divalent metal cation. Residues 240-275 (YVEFNLVWDRGTLFGLQTGGRTESILMSMPPLVRWE) form an important for dimerization region. A substrate-binding site is contributed by 258–260 (GGR).

Belongs to the aerobic coproporphyrinogen-III oxidase family. As to quaternary structure, homodimer. The cofactor is a divalent metal cation.

It localises to the cytoplasm. It catalyses the reaction coproporphyrinogen III + O2 + 2 H(+) = protoporphyrinogen IX + 2 CO2 + 2 H2O. The protein operates within porphyrin-containing compound metabolism; protoporphyrin-IX biosynthesis; protoporphyrinogen-IX from coproporphyrinogen-III (O2 route): step 1/1. Involved in the heme biosynthesis. Catalyzes the aerobic oxidative decarboxylation of propionate groups of rings A and B of coproporphyrinogen-III to yield the vinyl groups in protoporphyrinogen-IX. In Salmonella dublin (strain CT_02021853), this protein is Oxygen-dependent coproporphyrinogen-III oxidase.